The following is a 401-amino-acid chain: Putative TRAP transporter large permease protein HI_0050 (401 aa).

A run of 11 helical transmembrane segments spans residues 31 to 51 (FPLMAIPFFMLTGEIMKHGGI), 70 to 90 (LGYVAIISGLIFAGLSGSAVA), 115 to 135 (GLICAAGIISVVIPPSIPMII), 144 to 164 (ITKLFMGGTVPGLLMVVGLWV), 193 to 213 (AFWPLLLPIIIIVGLRGGIFT), 217 to 237 (AGVVAAIYAGIVSIAYKGLTF), 253 to 273 (MVMFVAASAMISAFAITVAQI), 290 to 310 (ILMFIIMLFLLLVGCVMDLIP), 330 to 350 (IAYFGIMMVINLSIGLITPPV), 353 to 373 (VLYVGSGISKLGIGALSKGIA), and 375 to 395 (FLFVYAIIMMLIVFFPEIVIV).

Belongs to the TRAP transporter large permease family.

It localises to the cell inner membrane. The chain is Putative TRAP transporter large permease protein HI_0050 from Haemophilus influenzae (strain ATCC 51907 / DSM 11121 / KW20 / Rd).